A 344-amino-acid chain; its full sequence is tRNA N6-adenosine threonylcarbamoyltransferase (344 aa).

His116 and His120 together coordinate Fe cation. Substrate is bound by residues 138-142, Asp171, Gly184, Asp188, and Asn277; that span reads LVSGG. Asp307 serves as a coordination point for Fe cation.

This sequence belongs to the KAE1 / TsaD family. Requires Fe(2+) as cofactor.

The protein resides in the cytoplasm. It carries out the reaction L-threonylcarbamoyladenylate + adenosine(37) in tRNA = N(6)-L-threonylcarbamoyladenosine(37) in tRNA + AMP + H(+). Its function is as follows. Required for the formation of a threonylcarbamoyl group on adenosine at position 37 (t(6)A37) in tRNAs that read codons beginning with adenine. Is involved in the transfer of the threonylcarbamoyl moiety of threonylcarbamoyl-AMP (TC-AMP) to the N6 group of A37, together with TsaE and TsaB. TsaD likely plays a direct catalytic role in this reaction. In Latilactobacillus sakei subsp. sakei (strain 23K) (Lactobacillus sakei subsp. sakei), this protein is tRNA N6-adenosine threonylcarbamoyltransferase.